The sequence spans 717 residues: Polyribonucleotide nucleotidyltransferase (717 aa).

Mg(2+)-binding residues include Asp487 and Asp493. One can recognise a KH domain in the interval 554–613; it reads PRITVINVPKDKIRDVIGTGGKVIREIVEYSGCKIDIEDDGTIKIAATSDEQAQKAIDRI. Residues 623-691 form the S1 motif domain; sequence GQIYTGKVVK…DRGKVKLSMR (69 aa).

It belongs to the polyribonucleotide nucleotidyltransferase family. Requires Mg(2+) as cofactor.

It localises to the cytoplasm. It catalyses the reaction RNA(n+1) + phosphate = RNA(n) + a ribonucleoside 5'-diphosphate. Its function is as follows. Involved in mRNA degradation. Catalyzes the phosphorolysis of single-stranded polyribonucleotides processively in the 3'- to 5'-direction. This chain is Polyribonucleotide nucleotidyltransferase, found in Acidiphilium cryptum (strain JF-5).